The chain runs to 508 residues: Potassium/proton antiporter CemA (508 aa).

5 helical membrane-spanning segments follow: residues 66–86, 282–302, 386–406, 433–453, and 468–488; these read LFII…LNLL, YQAL…WIIS, ILHL…FILG, ILLL…EVVI, and IISC…KYWI.

Belongs to the CemA family.

The protein resides in the plastid. The protein localises to the chloroplast inner membrane. It carries out the reaction K(+)(in) + H(+)(out) = K(+)(out) + H(+)(in). Functionally, contributes to K(+)/H(+) antiport activity by supporting proton efflux to control proton extrusion and homeostasis in chloroplasts in a light-dependent manner to modulate photosynthesis. Prevents excessive induction of non-photochemical quenching (NPQ) under continuous-light conditions. Indirectly promotes efficient inorganic carbon uptake into chloroplasts. In Anthoceros angustus (Hornwort), this protein is Potassium/proton antiporter CemA.